A 696-amino-acid chain; its full sequence is Glutamate-rich protein 6B (696 aa).

A compositionally biased stretch (polar residues) spans 1–10 (MSAENNQLSG). The interval 1–105 (MSAENNQLSG…EYLEKAGYLE (105 aa)) is disordered. 2 stretches are compositionally biased toward acidic residues: residues 32–44 (EDTEVELDEESLQ) and 54–72 (ESLEDKEYLEEEEDLEEEE). The span at 73 to 91 (YLGKEEYLKEEEYLGKEEH) shows a compositional bias: basic and acidic residues.

The protein belongs to the ERICH6 family.

The chain is Glutamate-rich protein 6B (ERICH6B) from Homo sapiens (Human).